Reading from the N-terminus, the 448-residue chain is Phosphoglucosamine mutase (448 aa).

Residue S100 is the Phosphoserine intermediate of the active site. S100, D240, D242, and D244 together coordinate Mg(2+). S100 bears the Phosphoserine mark.

Belongs to the phosphohexose mutase family. It depends on Mg(2+) as a cofactor. Post-translationally, activated by phosphorylation.

The enzyme catalyses alpha-D-glucosamine 1-phosphate = D-glucosamine 6-phosphate. In terms of biological role, catalyzes the conversion of glucosamine-6-phosphate to glucosamine-1-phosphate. In Bacillus cereus (strain B4264), this protein is Phosphoglucosamine mutase.